A 356-amino-acid chain; its full sequence is Protein-arginine kinase (356 aa).

The Phosphagen kinase C-terminal domain maps to 24–254 (IVLSTRIRLA…HQLIQQEKAA (231 aa)). Residues 27–31 (STRIR), His92, Arg125, 176–180 (RASVM), and 207–212 (RGIYGE) each bind ATP. The short motif at 337–342 (RDYRRA) is the RDXXRA motif of the pArg binding pocket involved in allosteric regulation element.

The protein belongs to the ATP:guanido phosphotransferase family.

It carries out the reaction L-arginyl-[protein] + ATP = N(omega)-phospho-L-arginyl-[protein] + ADP + H(+). Its activity is regulated as follows. Appears to be allosterically activated by the binding of pArg-containing polypeptides to the pArg-binding pocket localized in the C-terminal domain of McsB. Its function is as follows. Catalyzes the specific phosphorylation of arginine residues in a large number of proteins. Is part of the bacterial stress response system. Protein arginine phosphorylation has a physiologically important role and is involved in the regulation of many critical cellular processes, such as protein homeostasis, motility, competence, and stringent and stress responses, by regulating gene expression and protein activity. This chain is Protein-arginine kinase, found in Bacillus cytotoxicus (strain DSM 22905 / CIP 110041 / 391-98 / NVH 391-98).